Consider the following 365-residue polypeptide: 4-hydroxy-tetrahydrodipicolinate synthase 1, chloroplastic (365 aa).

The N-terminal 39 residues, 1–39 (MSALKNYGLISIDSALHFPRSNQLQSYKRRNAKWVSPIA), are a transit peptide targeting the chloroplast. T108 provides a ligand contact to pyruvate. Y194 (proton donor/acceptor) is an active-site residue. Residue K222 is the Schiff-base intermediate with substrate of the active site. A pyruvate-binding site is contributed by I261.

This sequence belongs to the DapA family.

The protein resides in the plastid. It is found in the chloroplast. The enzyme catalyses L-aspartate 4-semialdehyde + pyruvate = (2S,4S)-4-hydroxy-2,3,4,5-tetrahydrodipicolinate + H2O + H(+). It functions in the pathway amino-acid biosynthesis; L-lysine biosynthesis via DAP pathway; (S)-tetrahydrodipicolinate from L-aspartate: step 3/4. Catalyzes the condensation of (S)-aspartate-beta-semialdehyde [(S)-ASA] and pyruvate to 4-hydroxy-tetrahydrodipicolinate (HTPA). The sequence is that of 4-hydroxy-tetrahydrodipicolinate synthase 1, chloroplastic (DHDPS1) from Arabidopsis thaliana (Mouse-ear cress).